Here is a 540-residue protein sequence, read N- to C-terminus: Sterol 14-alpha demethylase (540 aa).

A helical transmembrane segment spans residues 41 to 61; it reads PLFLVSGFLGVCVAYAVANII. Heme is bound at residue C485.

The protein belongs to the cytochrome P450 family. Heme is required as a cofactor.

Its subcellular location is the membrane. It carries out the reaction a 14alpha-methyl steroid + 3 reduced [NADPH--hemoprotein reductase] + 3 O2 = a Delta(14) steroid + formate + 3 oxidized [NADPH--hemoprotein reductase] + 4 H2O + 4 H(+). It catalyses the reaction a 14alpha-methyl steroid + reduced [NADPH--hemoprotein reductase] + O2 = a 14alpha-hydroxymethyl steroid + oxidized [NADPH--hemoprotein reductase] + H2O + H(+). The enzyme catalyses a 14alpha-hydroxymethyl steroid + reduced [NADPH--hemoprotein reductase] + O2 = a 14alpha-formyl steroid + oxidized [NADPH--hemoprotein reductase] + 2 H2O + H(+). The catalysed reaction is a 14alpha-formyl steroid + reduced [NADPH--hemoprotein reductase] + O2 = a Delta(14) steroid + formate + oxidized [NADPH--hemoprotein reductase] + H2O + 2 H(+). It carries out the reaction lanosterol + 3 reduced [NADPH--hemoprotein reductase] + 3 O2 = 4,4-dimethyl-5alpha-cholesta-8,14,24-trien-3beta-ol + formate + 3 oxidized [NADPH--hemoprotein reductase] + 4 H2O + 4 H(+). It catalyses the reaction lanosterol + reduced [NADPH--hemoprotein reductase] + O2 = 32-hydroxylanosterol + oxidized [NADPH--hemoprotein reductase] + H2O + H(+). The enzyme catalyses 32-hydroxylanosterol + reduced [NADPH--hemoprotein reductase] + O2 = 32-oxolanosterol + oxidized [NADPH--hemoprotein reductase] + 2 H2O + H(+). The catalysed reaction is 32-oxolanosterol + reduced [NADPH--hemoprotein reductase] + O2 = 4,4-dimethyl-5alpha-cholesta-8,14,24-trien-3beta-ol + formate + oxidized [NADPH--hemoprotein reductase] + H2O + 2 H(+). It carries out the reaction eburicol + 3 reduced [NADPH--hemoprotein reductase] + 3 O2 = 14-demethyleburicol + formate + 3 oxidized [NADPH--hemoprotein reductase] + 4 H2O + 4 H(+). It catalyses the reaction eburicol + reduced [NADPH--hemoprotein reductase] + O2 = 32-hydroxyeburicol + oxidized [NADPH--hemoprotein reductase] + H2O + H(+). The enzyme catalyses 32-hydroxyeburicol + reduced [NADPH--hemoprotein reductase] + O2 = 32-oxoeburicol + oxidized [NADPH--hemoprotein reductase] + 2 H2O + H(+). The catalysed reaction is 32-oxoeburicol + reduced [NADPH--hemoprotein reductase] + O2 = 14-demethyleburicol + formate + oxidized [NADPH--hemoprotein reductase] + H2O + 2 H(+). The protein operates within steroid biosynthesis; sterol biosynthesis. Its function is as follows. Sterol 14-alpha demethylase; part of the gene cluster that mediates the biosynthesis of tetrahydropyranyl antifungal agent lanomycin that acts as an inhibitor of CYP51 and blocks the ergosterol biosynthesis. Sterol 14-alpha-demethylase plays a critical role in the biosynthesis of ergosterol, the major sterol component in fungal membranes that participates in a variety of functions. Acts as a self-resistant CYP51 that contains mutations found in CYP51s isolated from azole resistance strains and that is not inhibited by the final product of the cluster, lanomycin. This is Sterol 14-alpha demethylase from Pyrenophora dematioidea (Helminthosporium dematioideum).